Consider the following 85-residue polypeptide: Large ribosomal subunit protein bL27 (85 aa).

A disordered region spans residues 1 to 20 (MAHKKGGGTTRNGRDSESKR).

The protein belongs to the bacterial ribosomal protein bL27 family.

This chain is Large ribosomal subunit protein bL27, found in Herminiimonas arsenicoxydans.